Here is a 245-residue protein sequence, read N- to C-terminus: Chymotrypsinogen A (245 aa).

Disulfide bonds link C1/C122, C42/C58, C136/C201, C168/C182, and C191/C220. Positions 14-15 (SR) are excised as a propeptide. The region spanning 16–243 (IVNGEEAVPG…LVNWVQQTLA (228 aa)) is the Peptidase S1 domain. Active-site charge relay system residues include H57 and D102. The propeptide occupies 147–148 (TN). S195 serves as the catalytic Charge relay system.

The protein belongs to the peptidase S1 family.

The protein resides in the secreted. The protein localises to the extracellular space. The enzyme catalyses Preferential cleavage: Tyr-|-Xaa, Trp-|-Xaa, Phe-|-Xaa, Leu-|-Xaa.. The sequence is that of Chymotrypsinogen A from Bos taurus (Bovine).